Consider the following 334-residue polypeptide: Dihydroorotate dehydrogenase (quinone) (334 aa).

FMN is bound by residues A59–K63 and T83. Residue K63 coordinates substrate. Position 108 to 112 (N108 to F112) interacts with substrate. FMN contacts are provided by N136 and N169. N169 lines the substrate pocket. S172 acts as the Nucleophile in catalysis. A substrate-binding site is contributed by N174. Positions 214 and 242 each coordinate FMN. N243–T244 contacts substrate. FMN contacts are provided by residues G265, G294, and Y315–S316.

The protein belongs to the dihydroorotate dehydrogenase family. Type 2 subfamily. In terms of assembly, monomer. It depends on FMN as a cofactor.

Its subcellular location is the cell membrane. It catalyses the reaction (S)-dihydroorotate + a quinone = orotate + a quinol. The protein operates within pyrimidine metabolism; UMP biosynthesis via de novo pathway; orotate from (S)-dihydroorotate (quinone route): step 1/1. Its function is as follows. Catalyzes the conversion of dihydroorotate to orotate with quinone as electron acceptor. This chain is Dihydroorotate dehydrogenase (quinone), found in Acinetobacter baumannii (strain SDF).